The chain runs to 171 residues: Shikimate kinase (171 aa).

14–19 provides a ligand contact to ATP; the sequence is GAGKST. Mg(2+) is bound at residue serine 18. The substrate site is built by aspartate 36, arginine 60, and glycine 82. Arginine 120 is a binding site for ATP. Residue arginine 139 participates in substrate binding. Glutamine 156 is an ATP binding site.

This sequence belongs to the shikimate kinase family. As to quaternary structure, monomer. It depends on Mg(2+) as a cofactor.

It localises to the cytoplasm. It carries out the reaction shikimate + ATP = 3-phosphoshikimate + ADP + H(+). Its pathway is metabolic intermediate biosynthesis; chorismate biosynthesis; chorismate from D-erythrose 4-phosphate and phosphoenolpyruvate: step 5/7. Catalyzes the specific phosphorylation of the 3-hydroxyl group of shikimic acid using ATP as a cosubstrate. This Shewanella woodyi (strain ATCC 51908 / MS32) protein is Shikimate kinase.